The following is a 106-amino-acid chain: MAPLIPGELLAEPGELELNANREVTTLTVANSGDRPVQVGSHFHFQEANAALIFDRDAARGQRLDIPAGTAIRFEPGDNRDVNLIPFSGARRVVGFNGNINGPLDA.

This sequence belongs to the urease beta subunit family. In terms of assembly, heterotrimer of UreA (gamma), UreB (beta) and UreC (alpha) subunits. Three heterotrimers associate to form the active enzyme.

It localises to the cytoplasm. It catalyses the reaction urea + 2 H2O + H(+) = hydrogencarbonate + 2 NH4(+). It functions in the pathway nitrogen metabolism; urea degradation; CO(2) and NH(3) from urea (urease route): step 1/1. This Synechococcus sp. (strain CC9311) protein is Urease subunit beta.